The primary structure comprises 638 residues: Zinc finger and BTB domain-containing protein 22 (638 aa).

Residues 57 to 121 enclose the BTB domain; it reads CDVSIRVQGR…AYTGRLSMAA (65 aa). 4 disordered regions span residues 171 to 223, 229 to 248, 335 to 354, and 367 to 451; these read CASV…STSQ, SAAG…APVV, DDED…GEPE, and EPAD…HGAV. Residues 189 to 210 are compositionally biased toward polar residues; sequence SVRSHTSSRASENQSPSSSNYF. S203 is subject to Phosphoserine. A C2H2-type 1; atypical zinc finger spans residues 483–504; sequence FLCHCGKAFSHKSMRDRHVNMH. 2 C2H2-type zinc fingers span residues 510-532 and 538-559; these read FDCP…MKTH and YECS…HRGH. A disordered region spans residues 564–638; it reads HRMGVGGVGS…DFSGGGGAAH (75 aa).

Belongs to the krueppel C2H2-type zinc-finger protein family.

Its subcellular location is the nucleus. Functionally, may be involved in transcriptional regulation. In Mus musculus (Mouse), this protein is Zinc finger and BTB domain-containing protein 22 (Zbtb22).